The sequence spans 208 residues: Small ribosomal subunit protein uS4 (208 aa).

Residues 98 to 163 (SRLDNVVYRA…LTPFVIARAV (66 aa)) enclose the S4 RNA-binding domain.

Belongs to the universal ribosomal protein uS4 family. Part of the 30S ribosomal subunit. Contacts protein S5. The interaction surface between S4 and S5 is involved in control of translational fidelity.

Functionally, one of the primary rRNA binding proteins, it binds directly to 16S rRNA where it nucleates assembly of the body of the 30S subunit. With S5 and S12 plays an important role in translational accuracy. The protein is Small ribosomal subunit protein uS4 of Acidothermus cellulolyticus (strain ATCC 43068 / DSM 8971 / 11B).